Reading from the N-terminus, the 524-residue chain is MNDFWQHCSALLERELTPQQYVTWIKPLAPVAFDASANTLSIAAPNRFKLDWVKSQFSGRIADLARDFWNAPIEVQFVLDPKAGMRSPAAGAAPAAPRAPLASGPAATVAAIAANLTANQSATPAAPADVPMTPSAAAAHHLNNDDADIDLPSLPAHEAAAGRRTWRPGPGAAPAAGGEADSMYERSKLNPVLTFDNFVTGKANQLARAAAIQVADNPGISYNPLFLYGGVGLGKTHLIHAIGNQLLLDKPGARIRYIHAEQYVSDVVKAYQRKAFDDFKRYYHSLDLLLIDDIQFFSGKSRTQEEFFYAFEALVANKAQVIITSDTYPKEISGIDDRLISRFDSGLTVAIEPPELEMRVAILMRKAQSEGVNLSEDVAFFVAKHLRSNVRELEGALRKILAYSKFHGREISIELTKEALKDLLTVQNRQISVENIQKTVADFYNIKVADMYSKKRPANIARPRQIAMYLAKELTQKSLPEIGELFGGRDHTTVLHAVRKIADERSKDAQLNHELHVLEQTLKG.

The segment at 1–72 (MNDFWQHCSA…DLARDFWNAP (72 aa)) is domain I, interacts with DnaA modulators. Residues 72–187 (PIEVQFVLDP…GEADSMYERS (116 aa)) form a domain II region. Residues 188–404 (KLNPVLTFDN…GALRKILAYS (217 aa)) are domain III, AAA+ region. ATP contacts are provided by Gly232, Gly234, Lys235, and Thr236. The tract at residues 405-524 (KFHGREISIE…LHVLEQTLKG (120 aa)) is domain IV, binds dsDNA.

This sequence belongs to the DnaA family. As to quaternary structure, oligomerizes as a right-handed, spiral filament on DNA at oriC.

It is found in the cytoplasm. Functionally, plays an essential role in the initiation and regulation of chromosomal replication. ATP-DnaA binds to the origin of replication (oriC) to initiate formation of the DNA replication initiation complex once per cell cycle. Binds the DnaA box (a 9 base pair repeat at the origin) and separates the double-stranded (ds)DNA. Forms a right-handed helical filament on oriC DNA; dsDNA binds to the exterior of the filament while single-stranded (ss)DNA is stabiized in the filament's interior. The ATP-DnaA-oriC complex binds and stabilizes one strand of the AT-rich DNA unwinding element (DUE), permitting loading of DNA polymerase. After initiation quickly degrades to an ADP-DnaA complex that is not apt for DNA replication. Binds acidic phospholipids. This is Chromosomal replication initiator protein DnaA from Burkholderia multivorans (strain ATCC 17616 / 249).